A 322-amino-acid polypeptide reads, in one-letter code: tRNA-modifying protein YgfZ (322 aa).

Trp182 lines the folate pocket.

This sequence belongs to the tRNA-modifying YgfZ family.

It localises to the cytoplasm. Its function is as follows. Folate-binding protein involved in regulating the level of ATP-DnaA and in the modification of some tRNAs. It is probably a key factor in regulatory networks that act via tRNA modification, such as initiation of chromosomal replication. This is tRNA-modifying protein YgfZ from Vibrio parahaemolyticus serotype O3:K6 (strain RIMD 2210633).